A 91-amino-acid polypeptide reads, in one-letter code: Antitoxin RelJ (91 aa).

Belongs to the phD/YefM antitoxin family. In terms of assembly, homodimer.

Its function is as follows. Antitoxin component of a type II toxin-antitoxin (TA) system. A probable antitoxin for the putative mRNA interferase RelK. This chain is Antitoxin RelJ (relJ), found in Mycobacterium tuberculosis (strain CDC 1551 / Oshkosh).